The sequence spans 627 residues: uncharacterized protein (627 aa).

2 disordered regions span residues 441-466 and 608-627; these read EAVP…QGEN and DLRG…TEDR. Over residues 615-627 the composition is skewed to basic and acidic residues; sequence DYERGKGESTEDR.

This is an uncharacterized protein from Homo sapiens (Human).